A 257-amino-acid polypeptide reads, in one-letter code: Small ribosomal subunit protein uS2 (257 aa).

It belongs to the universal ribosomal protein uS2 family.

The polypeptide is Small ribosomal subunit protein uS2 (Trichlorobacter lovleyi (strain ATCC BAA-1151 / DSM 17278 / SZ) (Geobacter lovleyi)).